Reading from the N-terminus, the 372-residue chain is Glutamate 5-kinase (372 aa).

K14 serves as a coordination point for ATP. Substrate is bound by residues S54, D141, and N153. Residue 173–174 participates in ATP binding; it reads TD. One can recognise a PUA domain in the interval 280 to 358; it reads RGNVTLDEGA…DEIESLLGYI (79 aa).

Belongs to the glutamate 5-kinase family.

It localises to the cytoplasm. The enzyme catalyses L-glutamate + ATP = L-glutamyl 5-phosphate + ADP. Its pathway is amino-acid biosynthesis; L-proline biosynthesis; L-glutamate 5-semialdehyde from L-glutamate: step 1/2. Its function is as follows. Catalyzes the transfer of a phosphate group to glutamate to form L-glutamate 5-phosphate. This chain is Glutamate 5-kinase, found in Nitrosospira multiformis (strain ATCC 25196 / NCIMB 11849 / C 71).